The sequence spans 149 residues: Transcriptional repressor NrdR (149 aa).

Residues 3-34 (CPFCSATDTKVIDSRLVADGHQVRRRRECTEC) fold into a zinc finger. The region spanning 49–139 (PRVIKRDGTR…VYRAFEDVSQ (91 aa)) is the ATP-cone domain.

This sequence belongs to the NrdR family. Zn(2+) serves as cofactor.

Negatively regulates transcription of bacterial ribonucleotide reductase nrd genes and operons by binding to NrdR-boxes. The chain is Transcriptional repressor NrdR from Shewanella frigidimarina (strain NCIMB 400).